Reading from the N-terminus, the 59-residue chain is Large ribosomal subunit protein bL32 (59 aa).

Residues 35–59 (EAHLRHHISPNGYYRGRKVVKTKND) are disordered. Basic residues predominate over residues 49-59 (RGRKVVKTKND).

This sequence belongs to the bacterial ribosomal protein bL32 family.

The chain is Large ribosomal subunit protein bL32 from Polynucleobacter asymbioticus (strain DSM 18221 / CIP 109841 / QLW-P1DMWA-1) (Polynucleobacter necessarius subsp. asymbioticus).